The primary structure comprises 245 residues: tRNA (guanine-N(7)-)-methyltransferase (245 aa).

Glu-75, Glu-100, Asp-127, and Asp-149 together coordinate S-adenosyl-L-methionine. Residue Asp-149 is part of the active site. Residues Lys-153, Asp-185, and 222 to 225 (TKFE) each bind substrate.

This sequence belongs to the class I-like SAM-binding methyltransferase superfamily. TrmB family.

It carries out the reaction guanosine(46) in tRNA + S-adenosyl-L-methionine = N(7)-methylguanosine(46) in tRNA + S-adenosyl-L-homocysteine. It functions in the pathway tRNA modification; N(7)-methylguanine-tRNA biosynthesis. Functionally, catalyzes the formation of N(7)-methylguanine at position 46 (m7G46) in tRNA. The sequence is that of tRNA (guanine-N(7)-)-methyltransferase from Acinetobacter baylyi (strain ATCC 33305 / BD413 / ADP1).